A 257-amino-acid chain; its full sequence is UPF0246 protein ASA_3634 (257 aa).

The protein belongs to the UPF0246 family.

The chain is UPF0246 protein ASA_3634 from Aeromonas salmonicida (strain A449).